A 401-amino-acid polypeptide reads, in one-letter code: 1-deoxy-D-xylulose 5-phosphate reductoisomerase (401 aa).

NADPH-binding residues include Thr-10, Gly-11, Ser-12, Ile-13, Asn-38, and Asn-124. Lys-125 is a binding site for 1-deoxy-D-xylulose 5-phosphate. Glu-126 lines the NADPH pocket. Residue Asp-150 participates in Mn(2+) binding. 1-deoxy-D-xylulose 5-phosphate contacts are provided by Ser-151, Glu-152, Ser-186, and His-209. Residue Glu-152 participates in Mn(2+) binding. NADPH is bound at residue Gly-215. The 1-deoxy-D-xylulose 5-phosphate site is built by Ser-222, Asn-227, Lys-228, and Glu-231. Glu-231 contacts Mn(2+).

The protein belongs to the DXR family. Requires Mg(2+) as cofactor. Mn(2+) serves as cofactor.

The catalysed reaction is 2-C-methyl-D-erythritol 4-phosphate + NADP(+) = 1-deoxy-D-xylulose 5-phosphate + NADPH + H(+). It functions in the pathway isoprenoid biosynthesis; isopentenyl diphosphate biosynthesis via DXP pathway; isopentenyl diphosphate from 1-deoxy-D-xylulose 5-phosphate: step 1/6. Its function is as follows. Catalyzes the NADPH-dependent rearrangement and reduction of 1-deoxy-D-xylulose-5-phosphate (DXP) to 2-C-methyl-D-erythritol 4-phosphate (MEP). The sequence is that of 1-deoxy-D-xylulose 5-phosphate reductoisomerase from Vibrio campbellii (strain ATCC BAA-1116).